Here is a 565-residue protein sequence, read N- to C-terminus: Ubiquitin carboxyl-terminal hydrolase 21 (565 aa).

Basic and acidic residues-rich tracts occupy residues 1 to 14 (MPQA…RTRE) and 58 to 70 (PPDE…DLGR). The disordered stretch occupies residues 1–128 (MPQASEHRLG…LRPMGIALGG (128 aa)). Low complexity predominate over residues 71–81 (GRTSGSRPRGP). The segment covering 104 to 116 (SRTNLTRSKSVSS) has biased composition (polar residues). The Nuclear export signal motif lies at 134–152 (ELGAALSRLALRPEPPTLR). The 347-residue stretch at 212-558 (VGLRNLGNTC…EGYVLFYQLM (347 aa)) folds into the USP domain. The Nucleophile role is filled by C221. The segment at 324–347 (APPILASGPVPSPPRRGGALHEEP) is disordered. Zn(2+) is bound by residues C384, C387, C437, and C440. The active-site Proton acceptor is the H518.

It belongs to the peptidase C19 family. USP21 subfamily. In terms of assembly, interacts with BEND3.

It is found in the cytoplasm. It localises to the nucleus. The catalysed reaction is Thiol-dependent hydrolysis of ester, thioester, amide, peptide and isopeptide bonds formed by the C-terminal Gly of ubiquitin (a 76-residue protein attached to proteins as an intracellular targeting signal).. Deubiquitinates histone H2A, a specific tag for epigenetic transcriptional repression, thereby acting as a coactivator. Deubiquitination of histone H2A releaves the repression of di- and trimethylation of histone H3 at 'Lys-4', resulting in regulation of transcriptional initiation. Regulates gene expression via histone H2A deubiquitination. Deubiquitinates BAZ2A/TIP5 leading to its stabilization. Also capable of removing NEDD8 from NEDD8 conjugates but has no effect on Sentrin-1 conjugates. Also acts as a negative regulator of the ribosome quality control (RQC) by mediating deubiquitination of 40S ribosomal proteins RPS10/eS10 and RPS20/uS10, thereby antagonizing ZNF598-mediated 40S ubiquitination. This chain is Ubiquitin carboxyl-terminal hydrolase 21 (Usp21), found in Rattus norvegicus (Rat).